Here is a 684-residue protein sequence, read N- to C-terminus: MNPADQFTPIEDLTFTQAQAEIRDLSDELTKWGREYYEEDNPSVEDYVYDAHYARLVALEKAYPSLAMPDSPTQHVAAGNQTKNDSRGLQKVVHPVPMLSLGDVFSIQELLDWDLVTTKNAGSQQKYNLELKIDGLAISLRYENGRLIQASTRGDGSIGENVTDNVKTITEIPKVLNEPLTIEVRGEIYMRKEAFADLNQQRDEEGKTIFANPRNAAAGSLRQLDPKITAKRHLSSFIYYTAQNDVLGVNTQSDVLERFRQLGFPVNSSNKVIDRMTEVKDYIDEYTIKRDNLPYGIDGVVVKVNDLDVENELGNTVKIPRWSIAYKFPPEEALTVVRDITWTVGRTGVVTPTAIMDPVFLAGTKVKRASLHNPDYLQEKDVRIGDTVTLHKAGDIIPEVGQVILKKRPADAQAYPIPVYCPSCKSKLVHVQGEVALRCINPECPAQIKEGLIHFASRNAMNIDGLGPRVVEQLLSKNLIRKISDLYALTESQLTTLDKFADLSSKNLIQAIDRSRQNSVERLITALGIRGVGAKAAKVLAAHFKNLRNLQNAGAEEIAEIDGVGQVMADAIRQYFNSESVASLINELENFQVNFDYLTTSTVDEKNYFFNKRIVLTGKLIHWTRPQMQAWLEEHGANVSSSVSSKTDLLIAGSDVGSKLERANKLGIKVINEQDFINLSNAKK.

Residues 46 to 50 (DYVYD), 100 to 101 (SL), and Glu130 each bind NAD(+). Lys132 acts as the N6-AMP-lysine intermediate in catalysis. NAD(+)-binding residues include Arg153, Glu187, Lys303, and Lys327. Positions 421, 424, 439, and 444 each coordinate Zn(2+). A BRCT domain is found at 604–684 (DEKNYFFNKR…DFINLSNAKK (81 aa)).

The protein belongs to the NAD-dependent DNA ligase family. LigA subfamily. The cofactor is Mg(2+). It depends on Mn(2+) as a cofactor.

The catalysed reaction is NAD(+) + (deoxyribonucleotide)n-3'-hydroxyl + 5'-phospho-(deoxyribonucleotide)m = (deoxyribonucleotide)n+m + AMP + beta-nicotinamide D-nucleotide.. In terms of biological role, DNA ligase that catalyzes the formation of phosphodiester linkages between 5'-phosphoryl and 3'-hydroxyl groups in double-stranded DNA using NAD as a coenzyme and as the energy source for the reaction. It is essential for DNA replication and repair of damaged DNA. The sequence is that of DNA ligase from Oenococcus oeni (strain ATCC BAA-331 / PSU-1).